The sequence spans 273 residues: Outer surface protein A (273 aa).

Positions 1-16 are cleaved as a signal peptide; sequence MKKYLLGIGLILALIA. A lipid anchor (N-palmitoyl cysteine) is attached at Cys-17. Cys-17 carries S-diacylglycerol cysteine lipidation.

This sequence belongs to the OspA lipoprotein family.

It is found in the cell outer membrane. The protein localises to the cell surface. This chain is Outer surface protein A, found in Borreliella burgdorferi (strain N40) (Borrelia burgdorferi).